The chain runs to 295 residues: ATP synthase gamma chain (295 aa).

This sequence belongs to the ATPase gamma chain family. F-type ATPases have 2 components, CF(1) - the catalytic core - and CF(0) - the membrane proton channel. CF(1) has five subunits: alpha(3), beta(3), gamma(1), delta(1), epsilon(1). CF(0) has three main subunits: a, b and c.

It is found in the cell membrane. Functionally, produces ATP from ADP in the presence of a proton gradient across the membrane. The gamma chain is believed to be important in regulating ATPase activity and the flow of protons through the CF(0) complex. The sequence is that of ATP synthase gamma chain from Caldanaerobacter subterraneus subsp. tengcongensis (strain DSM 15242 / JCM 11007 / NBRC 100824 / MB4) (Thermoanaerobacter tengcongensis).